A 355-amino-acid polypeptide reads, in one-letter code: Elongation factor Ts (355 aa).

Positions 82 to 85 (TDFV) are involved in Mg(2+) ion dislocation from EF-Tu.

This sequence belongs to the EF-Ts family.

The protein resides in the cytoplasm. Associates with the EF-Tu.GDP complex and induces the exchange of GDP to GTP. It remains bound to the aminoacyl-tRNA.EF-Tu.GTP complex up to the GTP hydrolysis stage on the ribosome. The polypeptide is Elongation factor Ts (Helicobacter hepaticus (strain ATCC 51449 / 3B1)).